The sequence spans 527 residues: 4-alpha-glucanotransferase (527 aa).

The protein belongs to the disproportionating enzyme family.

The protein localises to the cytoplasm. The enzyme catalyses Transfers a segment of a (1-&gt;4)-alpha-D-glucan to a new position in an acceptor, which may be glucose or a (1-&gt;4)-alpha-D-glucan.. The protein is 4-alpha-glucanotransferase (malQ) of Chlamydia muridarum (strain MoPn / Nigg).